Reading from the N-terminus, the 202-residue chain is LexA repressor (202 aa).

Residues 27–47 constitute a DNA-binding region (H-T-H motif); sequence RAEIAAELGFRSANAAEEHLR. Residues Ser-119 and Lys-156 each act as for autocatalytic cleavage activity in the active site.

The protein belongs to the peptidase S24 family. In terms of assembly, homodimer.

It carries out the reaction Hydrolysis of Ala-|-Gly bond in repressor LexA.. Represses a number of genes involved in the response to DNA damage (SOS response), including recA and lexA. In the presence of single-stranded DNA, RecA interacts with LexA causing an autocatalytic cleavage which disrupts the DNA-binding part of LexA, leading to derepression of the SOS regulon and eventually DNA repair. The chain is LexA repressor from Marinobacter nauticus (strain ATCC 700491 / DSM 11845 / VT8) (Marinobacter aquaeolei).